Reading from the N-terminus, the 82-residue chain is Small ribosomal subunit protein bS16 (82 aa).

The protein belongs to the bacterial ribosomal protein bS16 family.

This chain is Small ribosomal subunit protein bS16, found in Deinococcus geothermalis (strain DSM 11300 / CIP 105573 / AG-3a).